Here is a 125-residue protein sequence, read N- to C-terminus: MPTISQLIGSERKRLTRKTKSPALKSCPERRGVCTRVYTSTPKKPNSALRKVARVRLTSGFEVTAYIPGIGHNLQEHSVVLLRGGRVKDLPGVRYHIIRGTLDTAGVKDRRQSRSKYGAKAPKNN.

The disordered stretch occupies residues 1–28 (MPTISQLIGSERKRLTRKTKSPALKSCP). The residue at position 89 (D89) is a 3-methylthioaspartic acid. The tract at residues 104-125 (TAGVKDRRQSRSKYGAKAPKNN) is disordered.

It belongs to the universal ribosomal protein uS12 family. As to quaternary structure, part of the 30S ribosomal subunit. Contacts proteins S8 and S17. May interact with IF1 in the 30S initiation complex.

In terms of biological role, with S4 and S5 plays an important role in translational accuracy. Its function is as follows. Interacts with and stabilizes bases of the 16S rRNA that are involved in tRNA selection in the A site and with the mRNA backbone. Located at the interface of the 30S and 50S subunits, it traverses the body of the 30S subunit contacting proteins on the other side and probably holding the rRNA structure together. The combined cluster of proteins S8, S12 and S17 appears to hold together the shoulder and platform of the 30S subunit. The chain is Small ribosomal subunit protein uS12 from Prochlorococcus marinus (strain MIT 9515).